Reading from the N-terminus, the 550-residue chain is Invertase (550 aa).

Positions 1 to 22 (MIQLSPLLLLPLFSVFNSIADA) are cleaved as a signal peptide. Residues 39–42 (WMND), Gln-60, and 103–104 (FS) each bind substrate. Asp-42 is an active-site residue. Asn-112, Asn-113, Asn-119, and Asn-165 each carry an N-linked (GlcNAc...) asparagine glycan. Position 170-171 (170-171 (RD)) interacts with substrate. N-linked (GlcNAc...) asparagine glycosylation occurs at Asn-211. Glu-223 is a substrate binding site. A glycan (N-linked (GlcNAc...) asparagine) is linked at Asn-237. Residue Trp-313 participates in substrate binding. N-linked (GlcNAc...) asparagine glycans are attached at residues Asn-333, Asn-364, Asn-398, and Asn-420.

This sequence belongs to the glycosyl hydrolase 32 family.

It carries out the reaction Hydrolysis of terminal non-reducing beta-D-fructofuranoside residues in beta-D-fructofuranosides.. The polypeptide is Invertase (INV1) (Wickerhamomyces anomalus (Yeast)).